A 276-amino-acid chain; its full sequence is Rhomboid protease GlpG (276 aa).

The next 6 helical transmembrane spans lie at 94–114 (GPFTWAILLICIAVFILQNLL), 142–162 (AFMHFSLMHILFNLLWWWYLG), 169–189 (IGSGKLVVITVISALLSGFVQ), 192–212 (FSGPWFGGLSGVVYALMGYVW), 229–249 (LILFSLVWLIAGWFDVFGMAI), and 252–272 (GAHVAGLATGLAMAFVDTLHG). Serine 201 acts as the Nucleophile in catalysis. Residue histidine 254 is part of the active site.

It belongs to the peptidase S54 family.

Its subcellular location is the cell inner membrane. It catalyses the reaction Cleaves type-1 transmembrane domains using a catalytic dyad composed of serine and histidine that are contributed by different transmembrane domains.. In terms of biological role, rhomboid-type serine protease that catalyzes intramembrane proteolysis. This is Rhomboid protease GlpG from Klebsiella pneumoniae (strain 342).